Consider the following 139-residue polypeptide: D-ribose pyranase (139 aa).

Residue H20 is the Proton donor of the active site. Substrate-binding positions include D28, H106, and 128 to 130; that span reads YAN.

It belongs to the RbsD / FucU family. RbsD subfamily. As to quaternary structure, homodecamer.

The protein localises to the cytoplasm. The enzyme catalyses beta-D-ribopyranose = beta-D-ribofuranose. The protein operates within carbohydrate metabolism; D-ribose degradation; D-ribose 5-phosphate from beta-D-ribopyranose: step 1/2. In terms of biological role, catalyzes the interconversion of beta-pyran and beta-furan forms of D-ribose. The protein is D-ribose pyranase of Photorhabdus laumondii subsp. laumondii (strain DSM 15139 / CIP 105565 / TT01) (Photorhabdus luminescens subsp. laumondii).